Consider the following 268-residue polypeptide: MICOS complex subunit MIC27 (268 aa).

The N-terminal 27 residues, 1 to 27, are a transit peptide targeting the mitochondrion; sequence MAAIRMGKLTTMPAGLIYASVSVHAAK. At 28 to 110 the chain is on the mitochondrial intermembrane side; that stretch reads QEESKKQLVK…YVYLKNPPRD (83 aa). Residues 111 to 129 traverse the membrane as a helical segment; it reads FLPKMGVITVSGLAGLVSA. The Mitochondrial matrix portion of the chain corresponds to 130–137; the sequence is RKGSKFKK. A helical transmembrane segment spans residues 138–155; that stretch reads ITYPLGLATLGATVCYPV. At 156-268 the chain is on the mitochondrial intermembrane side; sequence QSVIIAKVTA…EDIDMYSTRS (113 aa). Basic and acidic residues predominate over residues 187–200; it reads SKEESLPKPKEKTK. A disordered region spans residues 187–268; sequence SKEESLPKPK…EDIDMYSTRS (82 aa). A Phosphoserine modification is found at Ser204. Positions 249–260 are enriched in basic and acidic residues; the sequence is KLMDHGQSHPED.

Belongs to the apolipoprotein O/MICOS complex subunit Mic27 family. As to quaternary structure, component of the mitochondrial contact site and cristae organizing system (MICOS) complex, composed of at least MICOS10/MIC10, CHCHD3/MIC19, CHCHD6/MIC25, APOOL/MIC27, IMMT/MIC60, APOO/MIC23/MIC26 and MICOS13/MIC13. This complex was also known under the names MINOS or MitOS complex. The MICOS complex associates with mitochondrial outer membrane proteins SAMM50, MTX1 and MTX2 (together described as components of the mitochondrial outer membrane sorting assembly machinery (SAM) complex) and DNAJC11, mitochondrial inner membrane protein TMEM11 and with HSPA9. The MICOS and SAM complexes together with DNAJC11 are part of a large protein complex spanning both membranes termed the mitochondrial intermembrane space bridging (MIB) complex. Interacts with MICOS10/MIC10, IMMT/MIC60 and APOO/MIC23/MIC26.

The protein resides in the mitochondrion inner membrane. Its subcellular location is the mitochondrion. Functionally, component of the MICOS complex, a large protein complex of the mitochondrial inner membrane that plays crucial roles in the maintenance of crista junctions, inner membrane architecture, and formation of contact sites to the outer membrane. Specifically binds to cardiolipin (in vitro) but not to the precursor lipid phosphatidylglycerol. Plays a crucial role in crista junction formation and mitochondrial function,. This Homo sapiens (Human) protein is MICOS complex subunit MIC27 (APOOL).